The following is a 275-amino-acid chain: MICKNSIRHKELTLIIFLCFIYLSKTFVEVKAPPYVLVPEGSDINLTCFIKDDQGAGEDKVIVAWQQGDGEVTQGIKTTWDTTRQVGQTMLHISKVSKEAEGSYMCVVWINGDADYKKMNLGVFTVSKKTYMHNEVSITPRRSRVDMSDGRPLKIECAFSTRRIYGRSQVNIKWWKIDGITRKWEQQTSGVNLLLHTYGGIGSLSIPNPTTGESTGKYMCVVTCGDIGNVGFRLVKSLSPLSDTESDHSYTSEEGSHFMERCKVKKSPYGGWIVE.

Ig-like V-type domains follow at residues 25 to 122 (KTFV…MNLG) and 140 to 239 (PRRS…KSLS).

This Fowlpox virus (strain NVSL) (FPV) protein is Putative Ig-like V-type domain-containing protein FPV055.